The primary structure comprises 336 residues: Adenylosuccinate synthetase (336 aa).

GTP-binding positions include 12–18 (GDEGKGK) and 42–44 (GHS). Residue Asp13 is the Proton acceptor of the active site. Asp13 and Gly42 together coordinate Mg(2+). IMP contacts are provided by residues 13–16 (DEGK), 40–43 (NAGH), Thr127, Arg141, Gln179, Thr194, and Arg256. His43 functions as the Proton donor in the catalytic mechanism. 252–258 (TVTGRRR) contributes to the substrate binding site. GTP is bound by residues Arg258, 284–286 (CLD), and 324–326 (STG).

Belongs to the adenylosuccinate synthetase family. In terms of assembly, homodimer. It depends on Mg(2+) as a cofactor.

Its subcellular location is the cytoplasm. It catalyses the reaction IMP + L-aspartate + GTP = N(6)-(1,2-dicarboxyethyl)-AMP + GDP + phosphate + 2 H(+). Its pathway is purine metabolism; AMP biosynthesis via de novo pathway; AMP from IMP: step 1/2. In terms of biological role, plays an important role in the de novo pathway of purine nucleotide biosynthesis. Catalyzes the first committed step in the biosynthesis of AMP from IMP. The polypeptide is Adenylosuccinate synthetase (Methanococcus aeolicus (strain ATCC BAA-1280 / DSM 17508 / OCM 812 / Nankai-3)).